The chain runs to 245 residues: 4-hydroxy-tetrahydrodipicolinate reductase (245 aa).

Residues 7 to 12 (GARGKV), 75 to 77 (GTT), and 102 to 105 (APNF) contribute to the NAD(+) site. The active-site Proton donor/acceptor is His-132. His-133 provides a ligand contact to (S)-2,3,4,5-tetrahydrodipicolinate. Residue Lys-136 is the Proton donor of the active site. 142-143 (GT) serves as a coordination point for (S)-2,3,4,5-tetrahydrodipicolinate.

This sequence belongs to the DapB family.

The protein resides in the cytoplasm. It carries out the reaction (S)-2,3,4,5-tetrahydrodipicolinate + NAD(+) + H2O = (2S,4S)-4-hydroxy-2,3,4,5-tetrahydrodipicolinate + NADH + H(+). The catalysed reaction is (S)-2,3,4,5-tetrahydrodipicolinate + NADP(+) + H2O = (2S,4S)-4-hydroxy-2,3,4,5-tetrahydrodipicolinate + NADPH + H(+). The protein operates within amino-acid biosynthesis; L-lysine biosynthesis via DAP pathway; (S)-tetrahydrodipicolinate from L-aspartate: step 4/4. Its function is as follows. Catalyzes the conversion of 4-hydroxy-tetrahydrodipicolinate (HTPA) to tetrahydrodipicolinate. The protein is 4-hydroxy-tetrahydrodipicolinate reductase of Mycolicibacterium smegmatis (strain ATCC 700084 / mc(2)155) (Mycobacterium smegmatis).